Consider the following 306-residue polypeptide: MELKDYYAIMGVKPTDDLKTIKTAYRRLARKYHPDVSKEPDAEARFKEVAEAWEVLSDEQRRAEYDQMWQHRNDPQFSRQFQHGDGQSFNAEDFDDIFSSIFGQHARQSHQRPATRGHDIEIEVAVFLEETLTEHKRTISYNLPVYNAFGMIEQEIPKTLKVKIPAGVGNGQRIRLKGQGTPGENGGPNGDLWLVIHIAPHPLFDIVGQDLEIVVPVSPWEAALGAKVTVPTLKESILLTIPPGSQAGQRLRVKGKGLVSKKQTGDLYAVLKIVMPPKPDENTAALWQQLADAQSSFEPRKDWGKA.

The J domain maps to 5–69 (DYYAIMGVKP…QRRAEYDQMW (65 aa)).

Its subcellular location is the cytoplasm. The protein resides in the nucleoid. DNA-binding protein that preferentially recognizes a curved DNA sequence. It is probably a functional analog of DnaJ; displays overlapping activities with DnaJ, but functions under different conditions, probably acting as a molecular chaperone in an adaptive response to environmental stresses other than heat shock. Lacks autonomous chaperone activity; binds native substrates and targets them for recognition by DnaK. Its activity is inhibited by the binding of CbpM. This Escherichia coli (strain SMS-3-5 / SECEC) protein is Curved DNA-binding protein.